Reading from the N-terminus, the 489-residue chain is Glucose-6-phosphate 1-dehydrogenase (489 aa).

NADP(+) is bound by residues 15-22, R49, 86-87, and K149; these read GATGDLAK and DV. Substrate is bound by residues H179, K183, E217, and D236. The active-site Proton acceptor is the H241. Residues K341 and K346 each contribute to the substrate site.

Belongs to the glucose-6-phosphate dehydrogenase family.

It carries out the reaction D-glucose 6-phosphate + NADP(+) = 6-phospho-D-glucono-1,5-lactone + NADPH + H(+). Its pathway is carbohydrate degradation; pentose phosphate pathway; D-ribulose 5-phosphate from D-glucose 6-phosphate (oxidative stage): step 1/3. Catalyzes the oxidation of glucose 6-phosphate to 6-phosphogluconolactone. This chain is Glucose-6-phosphate 1-dehydrogenase, found in Bacillus subtilis (strain 168).